The following is a 122-amino-acid chain: Large ribosomal subunit protein bL19 (122 aa).

It belongs to the bacterial ribosomal protein bL19 family.

In terms of biological role, this protein is located at the 30S-50S ribosomal subunit interface and may play a role in the structure and function of the aminoacyl-tRNA binding site. The protein is Large ribosomal subunit protein bL19 of Acinetobacter baumannii (strain AB307-0294).